The following is a 198-amino-acid chain: Charged multivesicular body protein 2a homolog 2 (198 aa).

Residues 11–42 (KEVLRENQRNLNKSMREIDRERVALQNQEKKI) adopt a coiled-coil conformation.

It belongs to the SNF7 family. As to quaternary structure, probable core component of the endosomal sorting required for transport complex III (ESCRT-III). ESCRT-III components are thought to multimerize to form a flat lattice on the perimeter membrane of the endosome.

It is found in the endosome membrane. Functionally, probable core component of the endosomal sorting required for transport complex III (ESCRT-III) which is involved in multivesicular bodies (MVBs) formation and sorting of endosomal cargo proteins into MVBs. MVBs contain intraluminal vesicles (ILVs) that are generated by invagination and scission from the limiting membrane of the endosome and are delivered to lysosomes enabling degradation of membrane proteins. The polypeptide is Charged multivesicular body protein 2a homolog 2 (chmp2a2) (Dictyostelium discoideum (Social amoeba)).